The following is a 718-amino-acid chain: ATP-dependent RNA helicase homolog DQX1 (718 aa).

One can recognise a Helicase ATP-binding domain in the interval 54–222; that stretch reads HLESSPTGVV…WGNSPIVRVP (169 aa). 67-74 provides a ligand contact to ATP; that stretch reads GDPGSGKS. Residues 167-170 carry the DEAQ box motif; the sequence is DEAQ. Residues 245-447 enclose the Helicase C-terminal domain; the sequence is ACQAVLELCQ…ALMRALEDLD (203 aa). The segment at 690–718 is disordered; sequence QLREGTAEPPAAATETSSPQEYGDGCVLQ. The segment covering 696-708 has biased composition (low complexity); that stretch reads AEPPAAATETSSP.

In terms of tissue distribution, ubiquitous.

The protein localises to the nucleus. In terms of biological role, might be involved in RNA metabolism; it is missing helicase motif III and may not have helicase activity. In Mus musculus (Mouse), this protein is ATP-dependent RNA helicase homolog DQX1 (Dqx1).